The sequence spans 425 residues: Serine--tRNA ligase (425 aa).

231 to 233 (TAE) provides a ligand contact to L-serine. 262–264 (RSE) contacts ATP. Glutamate 285 lines the L-serine pocket. 349–352 (EISS) provides a ligand contact to ATP. Serine 385 provides a ligand contact to L-serine.

Belongs to the class-II aminoacyl-tRNA synthetase family. Type-1 seryl-tRNA synthetase subfamily. Homodimer. The tRNA molecule binds across the dimer.

The protein localises to the cytoplasm. The catalysed reaction is tRNA(Ser) + L-serine + ATP = L-seryl-tRNA(Ser) + AMP + diphosphate + H(+). The enzyme catalyses tRNA(Sec) + L-serine + ATP = L-seryl-tRNA(Sec) + AMP + diphosphate + H(+). It functions in the pathway aminoacyl-tRNA biosynthesis; selenocysteinyl-tRNA(Sec) biosynthesis; L-seryl-tRNA(Sec) from L-serine and tRNA(Sec): step 1/1. In terms of biological role, catalyzes the attachment of serine to tRNA(Ser). Is also able to aminoacylate tRNA(Sec) with serine, to form the misacylated tRNA L-seryl-tRNA(Sec), which will be further converted into selenocysteinyl-tRNA(Sec). The sequence is that of Serine--tRNA ligase from Bacillus velezensis (strain DSM 23117 / BGSC 10A6 / LMG 26770 / FZB42) (Bacillus amyloliquefaciens subsp. plantarum).